Here is a 185-residue protein sequence, read N- to C-terminus: Thymidine kinase (185 aa).

ATP contacts are provided by residues 7 to 14 (GPMFAGKT) and 83 to 86 (DEIQ). Glu-84 (proton acceptor) is an active-site residue. Residues Cys-139, Cys-142, Cys-177, and His-180 each coordinate Zn(2+).

Belongs to the thymidine kinase family. In terms of assembly, homotetramer.

The protein localises to the cytoplasm. It catalyses the reaction thymidine + ATP = dTMP + ADP + H(+). This is Thymidine kinase from Pyrobaculum aerophilum (strain ATCC 51768 / DSM 7523 / JCM 9630 / CIP 104966 / NBRC 100827 / IM2).